Consider the following 317-residue polypeptide: Ribosomal protein L11 methyltransferase (317 aa).

Residues threonine 158, glycine 179, aspartate 201, and asparagine 244 each contribute to the S-adenosyl-L-methionine site.

This sequence belongs to the methyltransferase superfamily. PrmA family.

The protein localises to the cytoplasm. It carries out the reaction L-lysyl-[protein] + 3 S-adenosyl-L-methionine = N(6),N(6),N(6)-trimethyl-L-lysyl-[protein] + 3 S-adenosyl-L-homocysteine + 3 H(+). Its function is as follows. Methylates ribosomal protein L11. The chain is Ribosomal protein L11 methyltransferase from Streptococcus equi subsp. equi (strain 4047).